The following is a 402-amino-acid chain: Protein prenyltransferase alpha subunit repeat-containing protein 1 (402 aa).

Ala-2 is modified (N-acetylalanine). PFTA repeat units lie at residues 87–120 (LIDV…LNPI), 122–155 (DLHL…QETS), 180–213 (EMEV…KLDV), and 219–252 (ELSS…SQTV). The segment at 263 to 282 (LRSEPALVPPKDEEAAVSTE) is disordered. The stretch at 295–328 (EVEFSTDLIDSYPGHETLWCHRRHIFYLQHHLNA) is one PFTA 5 repeat.

It belongs to the protein prenyltransferase subunit alpha family.

This is Protein prenyltransferase alpha subunit repeat-containing protein 1 (PTAR1) from Homo sapiens (Human).